Consider the following 352-residue polypeptide: Forkhead box protein D5 (352 aa).

2 disordered regions span residues 1–32 and 47–92; these read MSLSQESGAHHDPQDYPVVSDEEDEIDILGED and HSEM…GKAK. Residues 20–32 are compositionally biased toward acidic residues; the sequence is SDEEDEIDILGED. Positions 73–82 are enriched in low complexity; it reads ESEGGTSKDS. A DNA-binding region (fork-head) is located at residues 97 to 191; the sequence is KPPYSYIALI…DNGSFLRRRK (95 aa).

Expression begins in the newly forming dorsal mesoderm and is maintained during gastrulation at the dorsal blastopore lip (Spemann organizer). At the early neurula stages, expressed in a row of cells along the dorsal midline that are destined to become the fllor plate of the neural tube. At late neurula, expressed within the anterior and posterior poles of the embryo. After neural closure, expression is detected only in the tailtip, the otic vesicle and at the midbrain/hindbrain boundary.

Its subcellular location is the nucleus. Its function is as follows. Transcriptional repressor. This chain is Forkhead box protein D5, found in Xenopus tropicalis (Western clawed frog).